The chain runs to 307 residues: Type 2A encapsulin shell protein (307 aa).

This sequence belongs to the encapsulin family. Family 2A subfamily. In terms of assembly, the encapsulin nanocompartment is formed by 60 subunits; monomers form pentamers which assemble to form shells. There are 12 charged pores where the pentamers meet as well as 3-fold axis channels and dimer channels. Isolated from bacteria in a complex with cysteine desulfurase (AC Q9KII6).

The protein resides in the encapsulin nanocompartment. It is found in the cell membrane. Functionally, shell component of a type 2A encapsulin nanocompartment. Forms encapsulin nanocompartments about 24 nm in diameter from 60 monomers, probably involved in sulfur metabolism. Probably encapsulates cysteine desulfurase. In Mycolicibacterium paratuberculosis (strain ATCC BAA-968 / K-10) (Mycobacterium paratuberculosis), this protein is Type 2A encapsulin shell protein.